We begin with the raw amino-acid sequence, 187 residues long: Large ribosomal subunit protein uL5 (187 aa).

Belongs to the universal ribosomal protein uL5 family. As to quaternary structure, part of the 50S ribosomal subunit; part of the 5S rRNA/L5/L18/L25 subcomplex. Contacts the 5S rRNA and the P site tRNA. Forms a bridge to the 30S subunit in the 70S ribosome.

Functionally, this is one of the proteins that bind and probably mediate the attachment of the 5S RNA into the large ribosomal subunit, where it forms part of the central protuberance. In the 70S ribosome it contacts protein S13 of the 30S subunit (bridge B1b), connecting the 2 subunits; this bridge is implicated in subunit movement. Contacts the P site tRNA; the 5S rRNA and some of its associated proteins might help stabilize positioning of ribosome-bound tRNAs. This Roseobacter denitrificans (strain ATCC 33942 / OCh 114) (Erythrobacter sp. (strain OCh 114)) protein is Large ribosomal subunit protein uL5.